We begin with the raw amino-acid sequence, 299 residues long: MRIIVLGSAAGGGHPQWNCHTSASLRAWQQTDGAQRRTQASIAVSADGERWVLINASPDFRQQILATPALWPQHGLRHSPIEAVLLTSGEIDHIVGLLSMRESQRFSLHASSRVLDLLAQNPIFDAVNPHYVSRQPFALDTPLALCGLQLTPFSVPGKVPLFMESRSGGDLAGSNEETLGLTIDDGRRRMHYIPGCAAMTDALRARLQDAELVFFDGTLWRDDEMVQLGISQKTGQRMGHMSIDGPDGTIAAFAPLNVARKIFIHLNTTNPVLNTLSPEFASARASGWEVAHDGLEIAL.

The protein belongs to the PqqB family.

Its pathway is cofactor biosynthesis; pyrroloquinoline quinone biosynthesis. In terms of biological role, may be involved in the transport of PQQ or its precursor to the periplasm. This chain is Coenzyme PQQ synthesis protein B, found in Xanthomonas axonopodis pv. citri (strain 306).